The chain runs to 55 residues: Conotoxin Cal14.14 (55 aa).

Positions 1–20 are cleaved as a signal peptide; it reads MFRLGVFLLTFLLLVSMATS. Intrachain disulfides connect cysteine 34/cysteine 48 and cysteine 38/cysteine 52.

Expressed by the venom duct.

The protein localises to the secreted. In terms of biological role, probable neurotoxin. In Californiconus californicus (California cone), this protein is Conotoxin Cal14.14.